The primary structure comprises 385 residues: 2-oxoglutarate-dependent dioxygenase AFUA_1G01000 (385 aa).

Residues 203–327 form the Fe2OG dioxygenase domain; sequence PSDDFLRLLR…RYSVLVGTRP (125 aa). Fe cation contacts are provided by H230, D232, and H304. R318 is a binding site for 2-oxoglutarate.

The protein belongs to the iron/ascorbate-dependent oxidoreductase family. It depends on Fe(2+) as a cofactor.

Its function is as follows. 2-oxoglutarate-dependent dioxygenase; part of the gene cluster that mediates the biosynthesis of fumigermin that inhibits germination of spores of the inducing S.rapamycinicus, and thus helps the fungus to defend resources in the shared habitat against a bacterial competitor. The partially reducing polyketide synthase fngA alone is sufficient for the production of fumigermin. FgnA catalyzes the condensation of 3 malonyl-CoA units to an acetyl-CoA starter, and 3 methylations to yield fumigermin. It is remarkable that the five cluster genes including fgnA are conserved in distantly related fungi, supporting the assumption of a fumigermin cluster; it is thus possible that originally all five genes were functional, but that the genes encoding tailoring enzymes became inactive from mutations, similar to the case of the fgnA gene in strains A1163 and Af293. The sequence is that of 2-oxoglutarate-dependent dioxygenase AFUA_1G01000 from Aspergillus fumigatus (strain ATCC MYA-4609 / CBS 101355 / FGSC A1100 / Af293) (Neosartorya fumigata).